A 145-amino-acid polypeptide reads, in one-letter code: Ribonuclease H (145 aa).

One can recognise an RNase H type-1 domain in the interval 1-141 (MQEVIIYSDG…ADALANRGVA (141 aa)). Positions 9, 47, 69, and 133 each coordinate Mg(2+).

This sequence belongs to the RNase H family. In terms of assembly, monomer. Mg(2+) is required as a cofactor.

Its subcellular location is the cytoplasm. It catalyses the reaction Endonucleolytic cleavage to 5'-phosphomonoester.. Its function is as follows. Endonuclease that specifically degrades the RNA of RNA-DNA hybrids. The sequence is that of Ribonuclease H from Cupriavidus pinatubonensis (strain JMP 134 / LMG 1197) (Cupriavidus necator (strain JMP 134)).